We begin with the raw amino-acid sequence, 105 residues long: Large ribosomal subunit protein bL21 (105 aa).

It belongs to the bacterial ribosomal protein bL21 family. In terms of assembly, part of the 50S ribosomal subunit. Contacts protein L20.

In terms of biological role, this protein binds to 23S rRNA in the presence of protein L20. In Bacteroides fragilis (strain YCH46), this protein is Large ribosomal subunit protein bL21.